The following is a 202-amino-acid chain: Holliday junction branch migration complex subunit RuvA (202 aa).

The domain I stretch occupies residues 1 to 62; it reads MIGYLRGRLH…EDAMELYGFT (62 aa). A domain II region spans residues 63-141; sequence RPEELHLFTL…KSGLVDGTET (79 aa). The tract at residues 141–145 is flexible linker; the sequence is TEAIP. The tract at residues 146–202 is domain III; sequence AGGGDNDEALAALLALGYSREEIGPILARVRQELGNAAPTTAVLQAVLKTFGRGGGD.

The protein belongs to the RuvA family. Homotetramer. Forms an RuvA(8)-RuvB(12)-Holliday junction (HJ) complex. HJ DNA is sandwiched between 2 RuvA tetramers; dsDNA enters through RuvA and exits via RuvB. An RuvB hexamer assembles on each DNA strand where it exits the tetramer. Each RuvB hexamer is contacted by two RuvA subunits (via domain III) on 2 adjacent RuvB subunits; this complex drives branch migration. In the full resolvosome a probable DNA-RuvA(4)-RuvB(12)-RuvC(2) complex forms which resolves the HJ.

The protein resides in the cytoplasm. Its function is as follows. The RuvA-RuvB-RuvC complex processes Holliday junction (HJ) DNA during genetic recombination and DNA repair, while the RuvA-RuvB complex plays an important role in the rescue of blocked DNA replication forks via replication fork reversal (RFR). RuvA specifically binds to HJ cruciform DNA, conferring on it an open structure. The RuvB hexamer acts as an ATP-dependent pump, pulling dsDNA into and through the RuvAB complex. HJ branch migration allows RuvC to scan DNA until it finds its consensus sequence, where it cleaves and resolves the cruciform DNA. The polypeptide is Holliday junction branch migration complex subunit RuvA (Moorella thermoacetica (strain ATCC 39073 / JCM 9320)).